The chain runs to 61 residues: Probradykinin-1 (61 aa).

The signal sequence occupies residues 1-22 (MSFLKKSLFLVLFLGLVSFSIC). Positions 23 to 48 (EEEKRETEEEENKDETEEQSEEKKRF) are excised as a propeptide. Positions 24–61 (EEKRETEEEENKDETEEQSEEKKRFEPVPPGFTPFRLT) are disordered. The span at 30–42 (EEEENKDETEEQS) shows a compositional bias: acidic residues.

It belongs to the frog skin active peptide (FSAP) family. Bradykinin-related peptide subfamily. Expressed by the skin glands.

It is found in the secreted. In terms of biological role, may produce in vitro relaxation of rat arterial smooth muscle and constriction of intestinal smooth muscle. May target bradykinin receptors (BDKRB). The polypeptide is Probradykinin-1 (Pithecopus azureus (Orange-legged monkey tree frog)).